The primary structure comprises 315 residues: 4-hydroxy-3-methylbut-2-enyl diphosphate reductase (315 aa).

Cys-12 is a binding site for [4Fe-4S] cluster. (2E)-4-hydroxy-3-methylbut-2-enyl diphosphate contacts are provided by His-41 and His-74. Dimethylallyl diphosphate is bound by residues His-41 and His-74. Residues His-41 and His-74 each contribute to the isopentenyl diphosphate site. Cys-96 is a binding site for [4Fe-4S] cluster. His-124 is a binding site for (2E)-4-hydroxy-3-methylbut-2-enyl diphosphate. His-124 is a binding site for dimethylallyl diphosphate. His-124 lines the isopentenyl diphosphate pocket. The active-site Proton donor is Glu-126. Thr-168 serves as a coordination point for (2E)-4-hydroxy-3-methylbut-2-enyl diphosphate. Cys-198 contributes to the [4Fe-4S] cluster binding site. Ser-226, Ser-227, Asn-228, and Ser-270 together coordinate (2E)-4-hydroxy-3-methylbut-2-enyl diphosphate. Ser-226, Ser-227, Asn-228, and Ser-270 together coordinate dimethylallyl diphosphate. Isopentenyl diphosphate is bound by residues Ser-226, Ser-227, Asn-228, and Ser-270.

This sequence belongs to the IspH family. [4Fe-4S] cluster serves as cofactor.

The enzyme catalyses isopentenyl diphosphate + 2 oxidized [2Fe-2S]-[ferredoxin] + H2O = (2E)-4-hydroxy-3-methylbut-2-enyl diphosphate + 2 reduced [2Fe-2S]-[ferredoxin] + 2 H(+). The catalysed reaction is dimethylallyl diphosphate + 2 oxidized [2Fe-2S]-[ferredoxin] + H2O = (2E)-4-hydroxy-3-methylbut-2-enyl diphosphate + 2 reduced [2Fe-2S]-[ferredoxin] + 2 H(+). It participates in isoprenoid biosynthesis; dimethylallyl diphosphate biosynthesis; dimethylallyl diphosphate from (2E)-4-hydroxy-3-methylbutenyl diphosphate: step 1/1. The protein operates within isoprenoid biosynthesis; isopentenyl diphosphate biosynthesis via DXP pathway; isopentenyl diphosphate from 1-deoxy-D-xylulose 5-phosphate: step 6/6. Its function is as follows. Catalyzes the conversion of 1-hydroxy-2-methyl-2-(E)-butenyl 4-diphosphate (HMBPP) into a mixture of isopentenyl diphosphate (IPP) and dimethylallyl diphosphate (DMAPP). Acts in the terminal step of the DOXP/MEP pathway for isoprenoid precursor biosynthesis. This Pseudomonas entomophila (strain L48) protein is 4-hydroxy-3-methylbut-2-enyl diphosphate reductase.